A 58-amino-acid polypeptide reads, in one-letter code: Large ribosomal subunit protein uL30 (58 aa).

Belongs to the universal ribosomal protein uL30 family. Part of the 50S ribosomal subunit.

The chain is Large ribosomal subunit protein uL30 from Vibrio vulnificus (strain CMCP6).